Here is a 127-residue protein sequence, read N- to C-terminus: MALSKAEILDAIAGMSVLELSELIKEMEEKFGVSAAAAAVAVAAPAAGGAGAAAAEEQTEFTVVLLEAGANKVSVIKAVRELTGLGLKEAKDLVDGAPKPVKEALPKADAEAAKKKLEEAGAKVEVK.

This sequence belongs to the bacterial ribosomal protein bL12 family. As to quaternary structure, homodimer. Part of the ribosomal stalk of the 50S ribosomal subunit. Forms a multimeric L10(L12)X complex, where L10 forms an elongated spine to which 2 to 4 L12 dimers bind in a sequential fashion. Binds GTP-bound translation factors.

In terms of biological role, forms part of the ribosomal stalk which helps the ribosome interact with GTP-bound translation factors. Is thus essential for accurate translation. This is Large ribosomal subunit protein bL12 from Bordetella bronchiseptica (strain ATCC BAA-588 / NCTC 13252 / RB50) (Alcaligenes bronchisepticus).